We begin with the raw amino-acid sequence, 368 residues long: Putative glutamate--cysteine ligase 2 (368 aa).

The protein belongs to the glutamate--cysteine ligase type 2 family. YbdK subfamily.

The enzyme catalyses L-cysteine + L-glutamate + ATP = gamma-L-glutamyl-L-cysteine + ADP + phosphate + H(+). In terms of biological role, ATP-dependent carboxylate-amine ligase which exhibits weak glutamate--cysteine ligase activity. This is Putative glutamate--cysteine ligase 2 from Pseudomonas putida (strain ATCC 47054 / DSM 6125 / CFBP 8728 / NCIMB 11950 / KT2440).